Reading from the N-terminus, the 502-residue chain is Lysine--tRNA ligase (502 aa).

Mg(2+) is bound by residues Glu-403 and Glu-410.

Belongs to the class-II aminoacyl-tRNA synthetase family. In terms of assembly, homodimer. Requires Mg(2+) as cofactor.

It localises to the cytoplasm. The catalysed reaction is tRNA(Lys) + L-lysine + ATP = L-lysyl-tRNA(Lys) + AMP + diphosphate. The protein is Lysine--tRNA ligase of Synechococcus sp. (strain CC9605).